The primary structure comprises 365 residues: Outer capsid protein sigma-3 (365 aa).

The CCHC-type zinc-finger motif lies at 51 to 73 (CMHCLGVVGSLQRKLKHLPHHKC).

The protein belongs to the orthoreovirus sigma-3 protein family. Heterohexamer of three sigma-3 and three Mu-1 proteins. The RNA-binding form is probably a homodimer. Cleaved during virus the endosomal proteolytic disassembly of the outer capsid.

Its subcellular location is the virion. The protein resides in the host cytoplasm. The protein localises to the host nucleus. In terms of biological role, stimulates translation by blocking the activation of the dsRNA-dependent protein kinase EIF2AK2/PKR, thereby inhibiting the host interferon response. Sigma3 prevents the activation of EIF2AK2 by competing with the kinase for dsRNA-binding. Its function is as follows. The viral outer shell polypeptides, of which sigma-3 is one, impose structural constraints that prevent elongation of nascent transcripts by the RNA-dependent RNA polymerase lambda-3. This is Outer capsid protein sigma-3 (S4) from Mammalia (T2J).